A 398-amino-acid polypeptide reads, in one-letter code: Elongation factor Tu (398 aa).

A tr-type G domain is found at 10 to 208; it reads KPHVNVGTIG…ALDSHIPEPT (199 aa). Residues 19-26 form a G1 region; it reads GHIDHGKT. 19–26 is a binding site for GTP; sequence GHIDHGKT. Thr-26 is a binding site for Mg(2+). The interval 60-64 is G2; it reads TKTVT. Residues 83–86 are G3; it reads DCPG. GTP contacts are provided by residues 83–87 and 138–141; these read DCPGH and NKCD. Residues 138–141 are G4; it reads NKCD. The G5 stretch occupies residues 176-178; that stretch reads SSL.

Belongs to the TRAFAC class translation factor GTPase superfamily. Classic translation factor GTPase family. EF-Tu/EF-1A subfamily. In terms of assembly, monomer.

The protein localises to the cytoplasm. The catalysed reaction is GTP + H2O = GDP + phosphate + H(+). GTP hydrolase that promotes the GTP-dependent binding of aminoacyl-tRNA to the A-site of ribosomes during protein biosynthesis. This Rhodopirellula baltica (strain DSM 10527 / NCIMB 13988 / SH1) protein is Elongation factor Tu.